Reading from the N-terminus, the 118-residue chain is Large ribosomal subunit protein bL19 (118 aa).

This sequence belongs to the bacterial ribosomal protein bL19 family.

Its function is as follows. This protein is located at the 30S-50S ribosomal subunit interface and may play a role in the structure and function of the aminoacyl-tRNA binding site. This is Large ribosomal subunit protein bL19 from Campylobacter lari (strain RM2100 / D67 / ATCC BAA-1060).